Reading from the N-terminus, the 431-residue chain is Adenylosuccinate synthetase (431 aa).

GTP-binding positions include 12-18 (GDEGKGK) and 40-42 (GHT). The active-site Proton acceptor is D13. Residues D13 and G40 each contribute to the Mg(2+) site. IMP-binding positions include 13 to 16 (DEGK), 38 to 41 (NAGH), T128, R142, Q223, T238, and R301. H41 serves as the catalytic Proton donor. 297–303 (TVTGRPR) contributes to the substrate binding site. GTP-binding positions include R303, 329–331 (SID), and 411–413 (SVG).

Belongs to the adenylosuccinate synthetase family. Homodimer. Mg(2+) serves as cofactor.

It localises to the cytoplasm. It catalyses the reaction IMP + L-aspartate + GTP = N(6)-(1,2-dicarboxyethyl)-AMP + GDP + phosphate + 2 H(+). It functions in the pathway purine metabolism; AMP biosynthesis via de novo pathway; AMP from IMP: step 1/2. Its function is as follows. Plays an important role in the de novo pathway of purine nucleotide biosynthesis. Catalyzes the first committed step in the biosynthesis of AMP from IMP. The sequence is that of Adenylosuccinate synthetase from Lacticaseibacillus casei (strain BL23) (Lactobacillus casei).